A 131-amino-acid polypeptide reads, in one-letter code: Global transcriptional regulator Spx 1 (131 aa).

Cys10 and Cys13 are joined by a disulfide.

This sequence belongs to the ArsC family. Spx subfamily. As to quaternary structure, interacts with the C-terminal domain of the alpha subunit of the RNAP.

It localises to the cytoplasm. Its function is as follows. Global transcriptional regulator that plays a key role in stress response and exerts either positive or negative regulation of genes. Acts by interacting with the C-terminal domain of the alpha subunit of the RNA polymerase (RNAP). This interaction can enhance binding of RNAP to the promoter region of target genes and stimulate their transcription, or block interaction of RNAP with activator. This Oceanobacillus iheyensis (strain DSM 14371 / CIP 107618 / JCM 11309 / KCTC 3954 / HTE831) protein is Global transcriptional regulator Spx 1.